A 587-amino-acid chain; its full sequence is Arginine--tRNA ligase (587 aa).

The short motif at 126–136 is the 'HIGH' region element; that stretch reads ANPTGPLHVGH.

It belongs to the class-I aminoacyl-tRNA synthetase family. Monomer.

The protein resides in the cytoplasm. The catalysed reaction is tRNA(Arg) + L-arginine + ATP = L-arginyl-tRNA(Arg) + AMP + diphosphate. The polypeptide is Arginine--tRNA ligase (Azoarcus sp. (strain BH72)).